A 424-amino-acid polypeptide reads, in one-letter code: UDP-N-acetylglucosamine 1-carboxyvinyltransferase (424 aa).

22 to 23 (KN) provides a ligand contact to phosphoenolpyruvate. Arg93 contacts UDP-N-acetyl-alpha-D-glucosamine. Cys117 functions as the Proton donor in the catalytic mechanism. The residue at position 117 (Cys117) is a 2-(S-cysteinyl)pyruvic acid O-phosphothioketal. UDP-N-acetyl-alpha-D-glucosamine-binding positions include 122-126 (RPVDL), Asp307, and Ile329.

The protein belongs to the EPSP synthase family. MurA subfamily.

It is found in the cytoplasm. The catalysed reaction is phosphoenolpyruvate + UDP-N-acetyl-alpha-D-glucosamine = UDP-N-acetyl-3-O-(1-carboxyvinyl)-alpha-D-glucosamine + phosphate. It functions in the pathway cell wall biogenesis; peptidoglycan biosynthesis. Its function is as follows. Cell wall formation. Adds enolpyruvyl to UDP-N-acetylglucosamine. The protein is UDP-N-acetylglucosamine 1-carboxyvinyltransferase of Chlorobaculum parvum (strain DSM 263 / NCIMB 8327) (Chlorobium vibrioforme subsp. thiosulfatophilum).